The following is a 446-amino-acid chain: Exodeoxyribonuclease 7 large subunit (446 aa).

Belongs to the XseA family. As to quaternary structure, heterooligomer composed of large and small subunits.

It localises to the cytoplasm. It carries out the reaction Exonucleolytic cleavage in either 5'- to 3'- or 3'- to 5'-direction to yield nucleoside 5'-phosphates.. Bidirectionally degrades single-stranded DNA into large acid-insoluble oligonucleotides, which are then degraded further into small acid-soluble oligonucleotides. This is Exodeoxyribonuclease 7 large subunit from Xanthomonas campestris pv. campestris (strain B100).